The following is a 276-amino-acid chain: ATP synthase subunit delta (276 aa).

This sequence belongs to the ATPase delta chain family. In terms of assembly, F-type ATPases have 2 components, F(1) - the catalytic core - and F(0) - the membrane proton channel. F(1) has five subunits: alpha(3), beta(3), gamma(1), delta(1), epsilon(1). F(0) has three main subunits: a(1), b(2) and c(10-14). The alpha and beta chains form an alternating ring which encloses part of the gamma chain. F(1) is attached to F(0) by a central stalk formed by the gamma and epsilon chains, while a peripheral stalk is formed by the delta and b chains.

The protein localises to the cell membrane. Functionally, f(1)F(0) ATP synthase produces ATP from ADP in the presence of a proton or sodium gradient. F-type ATPases consist of two structural domains, F(1) containing the extramembraneous catalytic core and F(0) containing the membrane proton channel, linked together by a central stalk and a peripheral stalk. During catalysis, ATP synthesis in the catalytic domain of F(1) is coupled via a rotary mechanism of the central stalk subunits to proton translocation. In terms of biological role, this protein is part of the stalk that links CF(0) to CF(1). It either transmits conformational changes from CF(0) to CF(1) or is implicated in proton conduction. This chain is ATP synthase subunit delta, found in Kineococcus radiotolerans (strain ATCC BAA-149 / DSM 14245 / SRS30216).